Consider the following 257-residue polypeptide: uncharacterized protein (257 aa).

Positions Met-1 to Gly-22 are cleaved as a signal peptide. Cys-23 carries N-palmitoyl cysteine lipidation. Cys-23 is lipidated: S-diacylglycerol cysteine.

The protein belongs to the staphylococcal tandem lipoprotein family.

It is found in the cell membrane. This is an uncharacterized protein from Staphylococcus aureus (strain MRSA252).